Here is a 202-residue protein sequence, read N- to C-terminus: Small ribosomal subunit protein uS5 (202 aa).

Gly residues predominate over residues 1 to 13; that stretch reads MPGQQRRGGGSGG. The segment at 1 to 31 is disordered; that stretch reads MPGQQRRGGGSGGSDRRERRDRSGGGPAQEK. Over residues 14 to 23 the composition is skewed to basic and acidic residues; it reads SDRRERRDRS. Residues 34–97 form the S5 DRBM domain; that stretch reads YVERVVAINR…EEAKKHFFKV (64 aa).

This sequence belongs to the universal ribosomal protein uS5 family. Part of the 30S ribosomal subunit. Contacts proteins S4 and S8.

Its function is as follows. With S4 and S12 plays an important role in translational accuracy. Functionally, located at the back of the 30S subunit body where it stabilizes the conformation of the head with respect to the body. The protein is Small ribosomal subunit protein uS5 of Frankia alni (strain DSM 45986 / CECT 9034 / ACN14a).